A 760-amino-acid chain; its full sequence is E4 SUMO-protein ligase PIAL2 (760 aa).

Positions 143–301 (IKSPGSTFSQ…GVIEASPDSD (159 aa)) are interacting domain (IND), required for interaction with MOM1 and PIAL1. An SP-RING-type zinc finger spans residues 298–379 (PDSDIIEGPS…MAKILKDVEH (82 aa)). Positions 329, 331, 352, and 355 each coordinate Zn(2+). Over residues 440 to 450 (GDNKVEDRKPC) the composition is skewed to basic and acidic residues. Disordered regions lie at residues 440–471 (GDNK…SNDD), 492–522 (LGNT…MSID), 631–657 (GVRG…SVSR), and 699–760 (SQQS…GPTS). Polar residues-rich tracts occupy residues 492 to 518 (LGNT…SQIP), 631 to 653 (GVRG…PTVQ), and 699 to 729 (SQQS…SPFT).

The protein belongs to the PIAL protein ligase family. Homodimer. Interacts with MOM1 and PIAL1 to form a high molecular mass complex which mediates transcriptional silencing at heterochromatin regions. As to expression, expressed in leaves, stems and flowers, and, at low levels, in siliques and old leaves.

The protein localises to the nucleus. The protein operates within protein modification; protein sumoylation. Its function is as follows. Together with MOM1 and PIAL1, regulates transcriptional gene silencing (TGS) independently of changes in DNA methylation. E4-type SUMO ligase that promotes SUMO chain formation in a SCE1-dependent manner and thus contributes to a pathway for proteolytic removal of sumoylation substrates. Involved in stress responses and sulfur metabolism. The protein is E4 SUMO-protein ligase PIAL2 of Arabidopsis thaliana (Mouse-ear cress).